The chain runs to 107 residues: uncharacterized protein (107 aa).

Residues 88 to 107 (GSTPWGSGRQVNAARPIGGR) are disordered.

It is found in the virion. This is an uncharacterized protein from Acanthamoeba polyphaga (Amoeba).